Reading from the N-terminus, the 71-residue chain is MPVIKVRDNEPFEVALRRFKRSCEKAGILSEVRRREFYEKPTTERKRAKASAVKRYTKKLARENARRNRLY.

The protein belongs to the bacterial ribosomal protein bS21 family.

The polypeptide is Small ribosomal subunit protein bS21 (Baumannia cicadellinicola subsp. Homalodisca coagulata).